An 89-amino-acid polypeptide reads, in one-letter code: Small ribosomal subunit protein uS19 (89 aa).

Belongs to the universal ribosomal protein uS19 family.

Protein S19 forms a complex with S13 that binds strongly to the 16S ribosomal RNA. The protein is Small ribosomal subunit protein uS19 of Vesicomyosocius okutanii subsp. Calyptogena okutanii (strain HA).